The sequence spans 554 residues: Intraflagellar transport protein 56 (554 aa).

The tract at residues 1–23 (MMLSRAKPAVGNEVQQIDKKKKK) is disordered. TPR repeat units follow at residues 57–90 (EDTE…EGCN), 92–125 (DVWV…LQNR), 151–184 (IEDQ…NRDF), and 468–501 (ANDC…EGKR).

This sequence belongs to the IFT56 family. Component of the IFT complex B.

The protein localises to the cell projection. Its subcellular location is the cilium. In terms of biological role, component of the intraflagellar transport (IFT) complex B required for transport of proteins in the motile cilium. Required for transport of specific ciliary cargo proteins related to motility, while it is neither required for IFT complex B assembly or motion nor for cilium assembly. Plays a key role in maintaining the integrity of the IFT complex B and the proper ciliary localization of the IFT complex B components. Essential for maintaining proper microtubule organization within the ciliary axoneme. This is Intraflagellar transport protein 56 from Xenopus tropicalis (Western clawed frog).